A 287-amino-acid chain; its full sequence is Nucleotide-binding protein Ppro_0977 (287 aa).

ATP is bound at residue 8-15 (GMSGSGKS). 59–62 (DIRG) contacts GTP.

It belongs to the RapZ-like family.

Its function is as follows. Displays ATPase and GTPase activities. The polypeptide is Nucleotide-binding protein Ppro_0977 (Pelobacter propionicus (strain DSM 2379 / NBRC 103807 / OttBd1)).